A 170-amino-acid polypeptide reads, in one-letter code: dCTP pyrophosphatase 1 (170 aa).

The segment at 1–25 is disordered; sequence MSQAGTGVCGNGGQEDSAAAGPFSF. Ser2 is modified (N-acetylserine). Ser2 is subject to Phosphoserine. Residues His38 and 47-51 contribute to the substrate site; that span reads WEQFH. Glu63 and Glu66 together coordinate Mg(2+). Position 73 (Trp73) interacts with substrate. Positions 95 and 98 each coordinate Mg(2+). Tyr102 provides a ligand contact to substrate. The disordered stretch occupies residues 149 to 170; it reads LSENEAVGSGDPASELGNQAST.

Homotetramer. The cofactor is Mg(2+).

The protein resides in the cytoplasm. The protein localises to the cytosol. It catalyses the reaction dCTP + H2O = dCMP + diphosphate + H(+). Hydrolyzes deoxynucleoside triphosphates (dNTPs) to the corresponding nucleoside monophosphates. Has a strong preference for dCTP and its analogs including 5-iodo-dCTP and 5-methyl-dCTP for which it may even have a higher efficiency. May protect DNA or RNA against the incorporation of these genotoxic nucleotide analogs through their catabolism. This is dCTP pyrophosphatase 1 from Rattus norvegicus (Rat).